The chain runs to 335 residues: Tetraacyldisaccharide 4'-kinase (335 aa).

Residue 58–65 participates in ATP binding; the sequence is TVGGVGKT.

It belongs to the LpxK family.

It carries out the reaction a lipid A disaccharide + ATP = a lipid IVA + ADP + H(+). Its pathway is glycolipid biosynthesis; lipid IV(A) biosynthesis; lipid IV(A) from (3R)-3-hydroxytetradecanoyl-[acyl-carrier-protein] and UDP-N-acetyl-alpha-D-glucosamine: step 6/6. Transfers the gamma-phosphate of ATP to the 4'-position of a tetraacyldisaccharide 1-phosphate intermediate (termed DS-1-P) to form tetraacyldisaccharide 1,4'-bis-phosphate (lipid IVA). The polypeptide is Tetraacyldisaccharide 4'-kinase (Caulobacter sp. (strain K31)).